The chain runs to 157 residues: Putative gamma-glutamylcyclotransferase CG2811 (157 aa).

14–17 (YGTL) contacts substrate. E89 acts as the Proton acceptor in catalysis.

It belongs to the gamma-glutamylcyclotransferase family.

Functionally, putative gamma-glutamylcyclotransferase. The chain is Putative gamma-glutamylcyclotransferase CG2811 from Drosophila melanogaster (Fruit fly).